A 720-amino-acid chain; its full sequence is Nucleoporin 88 (720 aa).

Residues 584–611 (LALCREDRKSLTEAAERLADKYEDAKYR) are a coiled coil.

In terms of tissue distribution, widely expressed. Higher levels of expression are detected in highly proliferative frontal regions of the embryo, e.g. brain, eye and anterior trunk.

It is found in the nucleus. Its subcellular location is the nuclear pore complex. Its function is as follows. Component of the nuclear pore complex. The protein is Nucleoporin 88 of Danio rerio (Zebrafish).